A 195-amino-acid polypeptide reads, in one-letter code: Large ribosomal subunit protein uL5 (195 aa).

The protein belongs to the universal ribosomal protein uL5 family. Part of the 50S ribosomal subunit; part of the 5S rRNA/L5/L18/L25 subcomplex. Contacts the 5S rRNA and the P site tRNA. Forms a bridge to the 30S subunit in the 70S ribosome.

Functionally, this is one of the proteins that bind and probably mediate the attachment of the 5S RNA into the large ribosomal subunit, where it forms part of the central protuberance. In the 70S ribosome it contacts protein S13 of the 30S subunit (bridge B1b), connecting the 2 subunits; this bridge is implicated in subunit movement. Contacts the P site tRNA; the 5S rRNA and some of its associated proteins might help stabilize positioning of ribosome-bound tRNAs. The polypeptide is Large ribosomal subunit protein uL5 (Leifsonia xyli subsp. xyli (strain CTCB07)).